A 314-amino-acid chain; its full sequence is Melanoma-associated antigen 3 (314 aa).

A compositionally biased stretch (basic and acidic residues) spans 1–20 (MPLEQRSQHCKPEEGLEARG). The tract at residues 1–99 (MPLEQRSQHC…QEEEGPSTFP (99 aa)) is disordered. Residues 21–44 (EALGLVGAQAPATEEQEAASSSST) are compositionally biased toward low complexity. Polar residues predominate over residues 65–87 (PQGASSLPTTMNYPLWSQSYEDS). Residues 109-308 (LSRKVAELVH…ISYPPLHEWV (200 aa)) form the MAGE domain.

Interacts with TRIM28. In terms of processing, ubiquitinated by the DCX(DCAF12) complex specifically recognizes the diglutamate (Glu-Glu) at the C-terminus, leading to its degradation. Expressed in many tumors of several types, such as melanoma, head and neck squamous cell carcinoma, lung carcinoma and breast carcinoma, but not in normal tissues except for testes and placenta. Never expressed in kidney tumors, Leukemias and lymphomas.

Its function is as follows. Activator of ubiquitin ligase activity of RING-type zinc finger-containing E3 ubiquitin-protein ligases that acts as a repressor of autophagy. May enhance ubiquitin ligase activity of TRIM28 and stimulate p53/TP53 ubiquitination by TRIM28. Proposed to act through recruitment and/or stabilization of the Ubl-conjugating enzyme (E2) at the E3:substrate complex. May play a role in embryonal development and tumor transformation or aspects of tumor progression. In vitro promotes cell viability in melanoma cell lines. Antigen recognized on a melanoma by autologous cytolytic T-lymphocytes. This is Melanoma-associated antigen 3 from Homo sapiens (Human).